The sequence spans 238 residues: Ribosomal RNA small subunit methyltransferase G (238 aa).

S-adenosyl-L-methionine-binding positions include glycine 79, phenylalanine 84, 102 to 104, 130 to 131, and arginine 149; these read EAT and IE.

Belongs to the methyltransferase superfamily. RNA methyltransferase RsmG family.

The protein resides in the cytoplasm. Specifically methylates the N7 position of a guanine in 16S rRNA. This is Ribosomal RNA small subunit methyltransferase G from Chloroflexus aggregans (strain MD-66 / DSM 9485).